Consider the following 851-residue polypeptide: Receptor like protein kinase S.2 (851 aa).

The Protein kinase 1 domain maps to 117 to 436 (FSDELILGSG…LPSFKSHPLY (320 aa)). ATP-binding positions include 123-131 (LGSGGFGRV) and Lys-146. The active-site Proton acceptor is Asp-248. The interval 448–471 (SATTTTTRTTMTTTTSTTSFNASS) is disordered. The Protein kinase 2 domain maps to 532 to 819 (FSDARRVAEV…SILDGSERFF (288 aa)). ATP is bound by residues 538–546 (VAEVDFGTA) and Lys-560.

This sequence belongs to the protein kinase superfamily. Ser/Thr protein kinase family.

The enzyme catalyses L-seryl-[protein] + ATP = O-phospho-L-seryl-[protein] + ADP + H(+). The catalysed reaction is L-threonyl-[protein] + ATP = O-phospho-L-threonyl-[protein] + ADP + H(+). The chain is Receptor like protein kinase S.2 (LECRKS2) from Arabidopsis thaliana (Mouse-ear cress).